Consider the following 64-residue polypeptide: UPF0434 protein Oant_3286 (64 aa).

It belongs to the UPF0434 family.

The chain is UPF0434 protein Oant_3286 from Brucella anthropi (strain ATCC 49188 / DSM 6882 / CCUG 24695 / JCM 21032 / LMG 3331 / NBRC 15819 / NCTC 12168 / Alc 37) (Ochrobactrum anthropi).